The following is a 275-amino-acid chain: Chlorobenzene dihydrodiol dehydrogenase (275 aa).

The active-site Proton acceptor is the Tyr-155.

The protein belongs to the short-chain dehydrogenases/reductases (SDR) family.

The catalysed reaction is (1R,2R)-3-chlorocyclohexa-3,5-diene-1,2-diol + NAD(+) = 3-chlorocatechol + NADH + H(+). The protein operates within aromatic compound metabolism. Functionally, can transform various dihydrodiols of chlorobenzenes and chlorotoluenes into the respective catechols. The protein is Chlorobenzene dihydrodiol dehydrogenase of Cupriavidus sp. (strain PS12).